Consider the following 82-residue polypeptide: MVIDTSALVAMLNDEPEAQRFEIAVAADHVWLMSTASYPEMATVIETRFGEPGGREPKVSGQPLLYKGDDFACIDIRAVLAG.

D4 contacts Mg(2+).

Belongs to the PINc/VapC protein family. Mg(2+) serves as cofactor.

Its function is as follows. Toxic component of a possible type II toxin-antitoxin (TA) system. A putative RNase. Its cognate antitoxin is VapB34. This chain is Putative ribonuclease VapC34 (vapC34), found in Mycobacterium tuberculosis (strain CDC 1551 / Oshkosh).